We begin with the raw amino-acid sequence, 339 residues long: Glyceraldehyde-3-phosphate dehydrogenase (339 aa).

NAD(+) is bound by residues arginine 12–isoleucine 13, aspartate 39, arginine 84, and serine 127. D-glyceraldehyde 3-phosphate-binding positions include serine 157 to threonine 159, threonine 188, arginine 203, threonine 216 to glycine 217, and arginine 239. Catalysis depends on cysteine 158, which acts as the Nucleophile. Residue asparagine 320 coordinates NAD(+).

Belongs to the glyceraldehyde-3-phosphate dehydrogenase family. Homotetramer.

Its subcellular location is the cytoplasm. The enzyme catalyses D-glyceraldehyde 3-phosphate + phosphate + NAD(+) = (2R)-3-phospho-glyceroyl phosphate + NADH + H(+). The protein operates within carbohydrate degradation; glycolysis; pyruvate from D-glyceraldehyde 3-phosphate: step 1/5. In terms of biological role, catalyzes the oxidative phosphorylation of glyceraldehyde 3-phosphate (G3P) to 1,3-bisphosphoglycerate (BPG) using the cofactor NAD. The first reaction step involves the formation of a hemiacetal intermediate between G3P and a cysteine residue, and this hemiacetal intermediate is then oxidized to a thioester, with concomitant reduction of NAD to NADH. The reduced NADH is then exchanged with the second NAD, and the thioester is attacked by a nucleophilic inorganic phosphate to produce BPG. In Mycobacterium bovis (strain ATCC BAA-935 / AF2122/97), this protein is Glyceraldehyde-3-phosphate dehydrogenase (gap).